A 619-amino-acid polypeptide reads, in one-letter code: Chaperone protein HscA homolog (619 aa).

The protein belongs to the heat shock protein 70 family.

In terms of biological role, chaperone involved in the maturation of iron-sulfur cluster-containing proteins. Has a low intrinsic ATPase activity which is markedly stimulated by HscB. In Acinetobacter baumannii (strain ATCC 17978 / DSM 105126 / CIP 53.77 / LMG 1025 / NCDC KC755 / 5377), this protein is Chaperone protein HscA homolog.